A 296-amino-acid polypeptide reads, in one-letter code: Probable 6-phosphogluconolactonase 1 (296 aa).

Belongs to the glucosamine/galactosamine-6-phosphate isomerase family. 6-phosphogluconolactonase subfamily.

The catalysed reaction is 6-phospho-D-glucono-1,5-lactone + H2O = 6-phospho-D-gluconate + H(+). It functions in the pathway carbohydrate degradation; pentose phosphate pathway; D-ribulose 5-phosphate from D-glucose 6-phosphate (oxidative stage): step 2/3. Functionally, hydrolysis of 6-phosphogluconolactone to 6-phosphogluconate. In Oryza sativa subsp. japonica (Rice), this protein is Probable 6-phosphogluconolactonase 1.